Consider the following 181-residue polypeptide: MFKKFTREDVHSRSKVKSSIQRTLKAKLVKQYPKIEDVIDELIPKKSQIELIKCEDKIQLYSVDGEVLFFQKFDELIPSLKLVHKFPEAYPTVQVDRGAIKFVLSGANIMCPGLTSAGADLPPAPGYEKGTIVVINAENKENALAIGELMMGTEEIKSVNKGHSIELIHHLGDPLWNFSVE.

Methionine 1 carries the N-acetylmethionine modification. The region spanning 90–172 (YPTVQVDRGA…HSIELIHHLG (83 aa)) is the PUA domain.

Belongs to the TMA20 family. In terms of assembly, interacts with TMA22. Associates with ribosomal complexes.

The protein resides in the cytoplasm. In terms of biological role, involved in translation. The polypeptide is Translation machinery-associated protein 20 (TMA20) (Saccharomyces cerevisiae (strain ATCC 204508 / S288c) (Baker's yeast)).